A 798-amino-acid chain; its full sequence is Nuclear intron maturase 4, mitochondrial (798 aa).

A mitochondrion-targeting transit peptide spans 1 to 16 (MFRKRNLVLDLLRRCY). An intron maturase type-2 region spans residues 578–665 (VVAPTNAIGR…AAKYRIHENE (88 aa)). The segment at 729–778 (CFVIGCSMAAPAVYTLHAMERQKFPGWKTGFSVCIPSSLNGRRIGLCKQH) adopts a THAP-type zinc-finger fold.

This sequence belongs to the plant nuclear intron maturase (nMat) family.

The protein resides in the mitochondrion. The protein localises to the plastid. It is found in the chloroplast. Nuclear-encoded maturase required for splicing of group-II introns in mitochondria. Involved in NAD1 pre-mRNA processing and maturation of introns 1, 3 and 4. Necessary for mitochondrial biogenesis during early developmental stages. Essential for respiratory holocomplex I biogenesis in mitochondria. The sequence is that of Nuclear intron maturase 4, mitochondrial from Arabidopsis thaliana (Mouse-ear cress).